A 117-amino-acid polypeptide reads, in one-letter code: Transcription elongation factor A protein-like 8 (117 aa).

Composition is skewed to basic and acidic residues over residues Met-1–Leu-24 and Tyr-61–Glu-74. A disordered region spans residues Met-1–Glu-74. A coiled-coil region spans residues Glu-73–His-100.

The protein belongs to the TFS-II family. TFA subfamily.

The protein localises to the nucleus. Functionally, may be involved in transcriptional regulation. The polypeptide is Transcription elongation factor A protein-like 8 (TCEAL8) (Bos taurus (Bovine)).